The chain runs to 124 residues: Multifunctional methyltransferase subunit TRM112 homolog A (124 aa).

Residues arginine 2–histidine 120 form the TRM112 domain.

It belongs to the TRM112 family. Interacts with TRM9.

Acts as an activator of both rRNA/tRNA and protein methyltransferases. Required for TRM9 tRNA methyltransferase activity. Involved in the regulation of cell division progression during organ growth. Required for the expression of cell cycle-related genes, and the G2-M phase progression during organogenesis. The protein is Multifunctional methyltransferase subunit TRM112 homolog A of Arabidopsis thaliana (Mouse-ear cress).